The following is a 292-amino-acid chain: Polyketide transferase af380 (292 aa).

An abhydrolase domain region spans residues 46 to 267; the sequence is DVAVWFQQQG…FDLVAGRGHM (222 aa).

This sequence belongs to the polyketide transferase af380 family.

The catalysed reaction is fumagillol + dodecapentaneoyl-[polyketide synthase] = prefumagillin + holo-[polyketide synthase]. The protein operates within secondary metabolite biosynthesis; terpenoid biosynthesis. Its function is as follows. Polyketide transferase; part of the gene cluster that mediates the biosynthesis of fumagillin, a meroterpenoid that has numerous biological activities including irreversible inhibition of human type 2 methionine aminopeptidase (METAP2). Within the pathway, the polyketide transferase af380 catalyzes the transfer of a dodecapentaenoyl group synthesized by the polyketide synthase af370 onto 5R-hydroxy-seco-sesquiterpene to produce prefumagillin. The pathway begins with the conversion of farnesyl pyrophosphate (FPP) to beta-trans-bergamotene by the membrane-bound beta-trans-bergamotene synthase af520. The multifunctional cytochrome P450 monooxygenase af510 then converts beta-trans-bergamotene into 5-keto-demethoxyfumagillol via several oxydation steps. 5-keto-demethoxyfumagillol is then subjected to successive C-6 hydroxylation and O-methylation by the dioxygenase af480 and O-methyltransferase af390-400, respectively, to yield 5-keto-fumagillol, which is then stereoselectively reduced by the keto-reductase af490 to 5R-hydroxy-seco-sesquiterpene. The next step is the polyketide transferase af380-catalyzed transfer of a dodecapentaenoyl group synthesized by the polyketide synthase af370 onto 5R-hydroxy-seco-sesquiterpene which leads to the production of prefumagillin. Finally, oxidative cleavage by the monooxygenase af470 converts prefumagillin to fumagillin. This chain is Polyketide transferase af380, found in Aspergillus fumigatus (strain ATCC MYA-4609 / CBS 101355 / FGSC A1100 / Af293) (Neosartorya fumigata).